A 278-amino-acid chain; its full sequence is HTH-type transcriptional activator RhaS (278 aa).

In terms of domain architecture, HTH araC/xylS-type spans 174-272 (NQLLAWLEDH…DWSPRDIRQG (99 aa)). 2 consecutive DNA-binding regions (H-T-H motif) follow at residues 191-212 (EEVA…KQQT) and 239-262 (VTDI…RREF).

In terms of assembly, binds DNA as a dimer.

It is found in the cytoplasm. Activates expression of the rhaBAD and rhaT operons. The protein is HTH-type transcriptional activator RhaS of Klebsiella pneumoniae (strain 342).